The following is a 282-amino-acid chain: MKLLRYGPSGQEKPGILDADGRIRDLSAHVPDLSGDVLSDAGLARLRAIDPATLPLVSGEPRIGACVGHVGKFIGIGLNYADHAAEAGMPVPKEPVVFGKWTSSICGPNDGIDIPKGSVKTDWEVELGVVIGATCKDVDEARALDYVAGYCVVNDVSEREWQIERGGQWDKGKGFDTFGPIGPWLVTRDEVPDPQRLDLWLEIDGHRYQNGNTRTMVFTVAQLIAYLSSCMTLQPGDVITTGTPPGVGMGIKPSPVFLKAGQMVRLGVEGLGEQLQHTRDAR.

Residues Glu124, Glu126, and Asp155 each contribute to the Mg(2+) site.

Belongs to the FAH family. Mg(2+) is required as a cofactor.

The chain is Putative hydrolase Bcep18194_B0137 from Burkholderia lata (strain ATCC 17760 / DSM 23089 / LMG 22485 / NCIMB 9086 / R18194 / 383).